The chain runs to 466 residues: Ribosome biogenesis protein YTM1 (466 aa).

The segment at Ile11–Arg99 is ubiquitin-like (UBL) domain. The interval Ser109–Lys466 is sufficient for interaction with ERB1 and association with 66S pre-ribosomes. WD repeat units follow at residues Pro124–Tyr163, Gly165–Glu203, Gly219–Ile258, Gly296–Thr336, Thr338–Gln377, Gly384–Thr424, and Ser431–Lys466.

It belongs to the WD repeat WDR12/YTM1 family. In terms of assembly, component of the NOP7 complex, composed of ERB1, NOP7 and YTM1. The complex is held together by ERB1, which interacts with NOP7 via its N-terminal domain and with YTM1 via a high-affinity interaction between the seven-bladed beta-propeller domains of the 2 proteins. The NOP7 complex associates with the 66S pre-ribosome. Interacts (via UBL domain) with MDN1 (via VWFA/MIDAS domain).

It is found in the nucleus. The protein resides in the nucleolus. The protein localises to the nucleoplasm. Component of the NOP7 complex, which is required for maturation of the 25S and 5.8S ribosomal RNAs and formation of the 60S ribosome. This is Ribosome biogenesis protein YTM1 from Candida albicans (strain SC5314 / ATCC MYA-2876) (Yeast).